The following is a 286-amino-acid chain: ATP synthase gamma chain (286 aa).

This sequence belongs to the ATPase gamma chain family. In terms of assembly, F-type ATPases have 2 components, CF(1) - the catalytic core - and CF(0) - the membrane proton channel. CF(1) has five subunits: alpha(3), beta(3), gamma(1), delta(1), epsilon(1). CF(0) has three main subunits: a, b and c.

It is found in the cell inner membrane. Its function is as follows. Produces ATP from ADP in the presence of a proton gradient across the membrane. The gamma chain is believed to be important in regulating ATPase activity and the flow of protons through the CF(0) complex. This is ATP synthase gamma chain from Shewanella loihica (strain ATCC BAA-1088 / PV-4).